The following is a 352-amino-acid chain: Protein RecA (352 aa).

65–72 lines the ATP pocket; it reads GPESSGKT. The disordered stretch occupies residues 332–352; sequence EEVEKADVKKDAKKDAAEALK. Positions 333 to 352 are enriched in basic and acidic residues; the sequence is EVEKADVKKDAKKDAAEALK.

This sequence belongs to the RecA family.

It localises to the cytoplasm. Functionally, can catalyze the hydrolysis of ATP in the presence of single-stranded DNA, the ATP-dependent uptake of single-stranded DNA by duplex DNA, and the ATP-dependent hybridization of homologous single-stranded DNAs. It interacts with LexA causing its activation and leading to its autocatalytic cleavage. This is Protein RecA from Photobacterium profundum (strain SS9).